A 289-amino-acid polypeptide reads, in one-letter code: Aquaporin PIP1-1 (289 aa).

The interval 1–36 (MEGKEEDVRLGANRYSERQPIGTAAQGAGDDKDYKE) is disordered. 2 helical membrane passes run 58 to 78 (IAEFVATFLFLYITILTVMGV) and 93 to 115 (IAWSFGGMIFALVYCTAGISGGH). The NPA 1 signature appears at 117–119 (NPA). Helical transmembrane passes span 136 to 156 (IFYIVMQCLGAICGAGVVKGF), 178 to 198 (GDGLGAEIVGTFILVYTVFSA), and 212 to 232 (ILAPLPIGFAVFLVHLATIPI). The short motif at 238-240 (NPA) is the NPA 2 element. A helical transmembrane segment spans residues 260–280 (IFWVGPFVGAALAAIYHQVII).

It belongs to the MIP/aquaporin (TC 1.A.8) family. PIP (TC 1.A.8.11) subfamily. As to expression, expressed in roots, leaves and anthers.

It is found in the cell membrane. Its function is as follows. May function as water channel to facilitate the transport of water across cell membrane. This chain is Aquaporin PIP1-1 (PIP1-1), found in Oryza sativa subsp. japonica (Rice).